A 286-amino-acid chain; its full sequence is Eukaryotic translation initiation factor 3 subunit J (286 aa).

Disordered stretches follow at residues 1–35 (MSWD…DSWD), 141–162 (AASG…HPLF), and 229–258 (KAER…AVKT). A compositionally biased stretch (acidic residues) spans 21 to 35 (WEEEGNDEPLLDSWD). Residues 35–75 (DIDEEEVARKKKEEEAKKKAEKEALKKKQEESKAKKLSKNK) are a coiled coil.

This sequence belongs to the eIF-3 subunit J family. As to quaternary structure, component of the eukaryotic translation initiation factor 3 (eIF-3) complex.

It localises to the cytoplasm. In terms of biological role, component of the eukaryotic translation initiation factor 3 (eIF-3) complex, which is involved in protein synthesis of a specialized repertoire of mRNAs and, together with other initiation factors, stimulates binding of mRNA and methionyl-tRNAi to the 40S ribosome. The eIF-3 complex specifically targets and initiates translation of a subset of mRNAs involved in cell proliferation. This Debaryomyces hansenii (strain ATCC 36239 / CBS 767 / BCRC 21394 / JCM 1990 / NBRC 0083 / IGC 2968) (Yeast) protein is Eukaryotic translation initiation factor 3 subunit J.